The chain runs to 300 residues: Tyrosine recombinase XerC (300 aa).

Positions 2-88 (IQEGKLEQQF…SLRSFYTFLL (87 aa)) constitute a Core-binding (CB) domain. The Tyr recombinase domain occupies 109-294 (RLPKFFYSEE…TKEHLKSTYM (186 aa)). Residues Arg150, Lys174, His246, Arg249, and His272 contribute to the active site. Catalysis depends on Tyr281, which acts as the O-(3'-phospho-DNA)-tyrosine intermediate.

Belongs to the 'phage' integrase family. XerC subfamily. As to quaternary structure, forms a cyclic heterotetrameric complex composed of two molecules of XerC and two molecules of XerD.

It localises to the cytoplasm. Functionally, site-specific tyrosine recombinase, which acts by catalyzing the cutting and rejoining of the recombining DNA molecules. The XerC-XerD complex is essential to convert dimers of the bacterial chromosome into monomers to permit their segregation at cell division. It also contributes to the segregational stability of plasmids. The protein is Tyrosine recombinase XerC of Listeria monocytogenes serotype 4b (strain F2365).